The following is a 313-amino-acid chain: Transcription initiation factor IIB 2 (313 aa).

The TFIIB-type zinc-finger motif lies at 13-44; sequence APKRCPECHSEHLIRDYEHGELICADCGAVIE. 4 residues coordinate Zn(2+): cysteine 17, cysteine 20, cysteine 36, and cysteine 39. Repeat copies occupy residues 130-213 and 224-305.

This sequence belongs to the TFIIB family.

Its function is as follows. Stabilizes TBP binding to an archaeal box-A promoter. Also responsible for recruiting RNA polymerase II to the pre-initiation complex (DNA-TBP-TFIIB). The sequence is that of Transcription initiation factor IIB 2 from Thermoplasma volcanium (strain ATCC 51530 / DSM 4299 / JCM 9571 / NBRC 15438 / GSS1).